A 420-amino-acid chain; its full sequence is Tyrosine--tRNA ligase (420 aa).

Position 33 (Tyr33) interacts with L-tyrosine. Residues 38–47 (PTADSLHIGH) carry the 'HIGH' region motif. L-tyrosine-binding residues include Tyr168 and Gln172. Residues 231-235 (KFGKT) carry the 'KMSKS' region motif. Lys234 provides a ligand contact to ATP. The 67-residue stretch at 353–419 (MLLVDALIKV…GKKNYYLVKL (67 aa)) folds into the S4 RNA-binding domain.

The protein belongs to the class-I aminoacyl-tRNA synthetase family. TyrS type 1 subfamily. In terms of assembly, homodimer.

Its subcellular location is the cytoplasm. It catalyses the reaction tRNA(Tyr) + L-tyrosine + ATP = L-tyrosyl-tRNA(Tyr) + AMP + diphosphate + H(+). Functionally, catalyzes the attachment of tyrosine to tRNA(Tyr) in a two-step reaction: tyrosine is first activated by ATP to form Tyr-AMP and then transferred to the acceptor end of tRNA(Tyr). This Desulfitobacterium hafniense (strain Y51) protein is Tyrosine--tRNA ligase.